A 410-amino-acid chain; its full sequence is E3 ubiquitin-protein ligase MARCHF4 (410 aa).

The signal sequence occupies residues 1–18 (MLMPLCGLLWWWWCCCSG). The tract at residues 92–136 (GPREVVGREPPPVPPPPPLPPSSVEDDWGGPATEPPASLLSSASS) is disordered. The segment covering 100-112 (EPPPVPPPPPLPP) has biased composition (pro residues). Residues 126 to 136 (PPASLLSSASS) show a composition bias toward low complexity. The RING-CH-type zinc-finger motif lies at 155 to 215 (DSGMRTPLCR…ELCYYKYHVI (61 aa)). Residues C163, C166, C179, C181, H189, C192, C205, and C208 each coordinate Zn(2+). Helical transmembrane passes span 238–258 (VAAA…LIWS) and 272–292 (LFQI…GLII). 2 disordered regions span residues 324-372 (EDQK…SGPL) and 390-410 (PHEQ…VTTV). A compositionally biased stretch (polar residues) spans 333–346 (NPRTSSSTQANIPS). Low complexity predominate over residues 352–366 (AGTPAPEQGPAQAAG).

In terms of tissue distribution, expressed in brain and placenta.

The protein resides in the golgi apparatus membrane. It carries out the reaction S-ubiquitinyl-[E2 ubiquitin-conjugating enzyme]-L-cysteine + [acceptor protein]-L-lysine = [E2 ubiquitin-conjugating enzyme]-L-cysteine + N(6)-ubiquitinyl-[acceptor protein]-L-lysine.. It functions in the pathway protein modification; protein ubiquitination. Functionally, E3 ubiquitin-protein ligase that may mediate ubiquitination of MHC-I and CD4, and promote their subsequent endocytosis and sorting to lysosomes via multivesicular bodies. E3 ubiquitin ligases accept ubiquitin from an E2 ubiquitin-conjugating enzyme in the form of a thioester and then directly transfer the ubiquitin to targeted substrates. The chain is E3 ubiquitin-protein ligase MARCHF4 from Homo sapiens (Human).